The following is a 666-amino-acid chain: Neurexin-2-beta (666 aa).

Gly residues predominate over residues 1–10; the sequence is MPPGGSGPGG. The interval 1–30 is disordered; sequence MPPGGSGPGGCPRRPPALAGPLPPPPPPPP. An N-terminal signal peptide occupies residues 1–50; the sequence is MPPGGSGPGGCPRRPPALAGPLPPPPPPPPPPLLPLLPLLLLLLLGAAEG. Positions 21–30 are enriched in pro residues; sequence PLPPPPPPPP. The Extracellular portion of the chain corresponds to 51 to 590; sequence ARVSSSLSTT…EVIRESSSTT (540 aa). One can recognise a Laminin G-like domain in the interval 91-299; that stretch reads TTYIFGKGGA…HLRLVGEGPS (209 aa). Asp-143 and Val-160 together coordinate Ca(2+). Residue Asn-190 is glycosylated (N-linked (GlcNAc...) asparagine). Ca(2+)-binding residues include Ile-242 and Asn-244. Positions 327-346 are disordered; that stretch reads ATTTTRRGRSPTLRDSTTQN. An O-linked (Xyl...) (heparan sulfate) serine glycan is attached at Ser-354. Disordered stretches follow at residues 412–443 and 479–580; these read ATQD…CEEP and TLLS…PGAV. A helical membrane pass occupies residues 591 to 611; that stretch reads GMVVGIVAAAALCILILLYAM. At 612-666 the chain is on the cytoplasmic side; the sequence is YKYRNRDEGSYQVDQSRNYISNSAQSNGAVVKEKAPAAPKTPSKAKKNKDKEYYV. Positions 633 to 666 are disordered; it reads NSAQSNGAVVKEKAPAAPKTPSKAKKNKDKEYYV.

It belongs to the neurexin family. In terms of assembly, interacts (via cytoplasmic C-terminal region) with CASK. Specific isoforms bind alpha-dystroglycan and neuroligins NLGN1, NLGN2 and NLGN3. Interacts with CBLN1, CBLN2 and, less avidly, with CBLN4. Interacts with CLSTN3. O-glycosylated; contains heparan sulfate. Heparan sulfate attachment is required for synapse development by mediating interactions with neuroligins.

It localises to the presynaptic cell membrane. Neuronal cell surface protein that may be involved in cell recognition and cell adhesion. This Homo sapiens (Human) protein is Neurexin-2-beta (NRXN2).